A 314-amino-acid chain; its full sequence is Glutamyl-Q tRNA(Asp) synthetase (314 aa).

Residues 14–18 (RFAPS) and Glu-50 each bind L-glutamate. A 'HIGH' region motif is present at residues 17 to 27 (PSPTGPLHVGS). Residues Cys-106, Cys-108, Tyr-129, and Cys-133 each coordinate Zn(2+). Positions 187 and 205 each coordinate L-glutamate. The short motif at 243–247 (KLSKR) is the 'KMSKS' region element. Lys-246 lines the ATP pocket.

Belongs to the class-I aminoacyl-tRNA synthetase family. GluQ subfamily. Zn(2+) serves as cofactor.

In terms of biological role, catalyzes the tRNA-independent activation of glutamate in presence of ATP and the subsequent transfer of glutamate onto a tRNA(Asp). Glutamate is transferred on the 2-amino-5-(4,5-dihydroxy-2-cyclopenten-1-yl) moiety of the queuosine in the wobble position of the QUC anticodon. The sequence is that of Glutamyl-Q tRNA(Asp) synthetase from Geobacter sulfurreducens (strain ATCC 51573 / DSM 12127 / PCA).